A 451-amino-acid chain; its full sequence is Tubulin alpha-2 chain (451 aa).

Q11 lines the GTP pocket. Position 40 is an N6-acetyllysine (K40). Residues E71, G144, T145, T179, N206, and N228 each coordinate GTP. Residue E71 coordinates Mg(2+). E254 is a catalytic residue.

Belongs to the tubulin family. Dimer of alpha and beta chains. A typical microtubule is a hollow water-filled tube with an outer diameter of 25 nm and an inner diameter of 15 nM. Alpha-beta heterodimers associate head-to-tail to form protofilaments running lengthwise along the microtubule wall with the beta-tubulin subunit facing the microtubule plus end conferring a structural polarity. Microtubules usually have 13 protofilaments but different protofilament numbers can be found in some organisms and specialized cells. Mg(2+) serves as cofactor. Post-translationally, undergoes a tyrosination/detyrosination cycle, the cyclic removal and re-addition of a C-terminal tyrosine residue by the enzymes tubulin tyrosine carboxypeptidase (TTCP) and tubulin tyrosine ligase (TTL), respectively.

Its subcellular location is the cytoplasm. The protein resides in the cytoskeleton. The enzyme catalyses GTP + H2O = GDP + phosphate + H(+). Its function is as follows. Tubulin is the major constituent of microtubules, a cylinder consisting of laterally associated linear protofilaments composed of alpha- and beta-tubulin heterodimers. Microtubules grow by the addition of GTP-tubulin dimers to the microtubule end, where a stabilizing cap forms. Below the cap, tubulin dimers are in GDP-bound state, owing to GTPase activity of alpha-tubulin. This Chlamydomonas reinhardtii (Chlamydomonas smithii) protein is Tubulin alpha-2 chain (TUBA2).